We begin with the raw amino-acid sequence, 1812 residues long: Putative surface cell antigen sca2 (1812 aa).

An N-terminal signal peptide occupies residues 1-17 (MSTCLLTSSFLSTSARA). Composition is skewed to polar residues over residues 344–357 (FLNN…STGR) and 371–382 (MSNQSIHNTGTS). Disordered stretches follow at residues 344 to 382 (FLNN…TGTS), 648 to 691 (LEQT…QGFS), and 1338 to 1462 (KQEN…KKDV). Positions 656–685 (PNPPPLPLNGGIPNPPPLPLNGSMPPPPPL) are enriched in pro residues. Composition is skewed to basic and acidic residues over residues 1349 to 1367 (STKD…EQSD) and 1382 to 1393 (SKNDKSSDDKKS). Acidic residues predominate over residues 1401–1416 (DEDDTGYATDEEELEE). The segment covering 1417 to 1455 (SNSTTNEELEESNSTTNEELEESNSTTNEELEESNSTTN) has biased composition (low complexity). One can recognise an Autotransporter domain in the interval 1533-1812 (ETSINRGVWI…QGLIKLKVNL (280 aa)).

Its subcellular location is the cell outer membrane. The sequence is that of Putative surface cell antigen sca2 (sca2) from Rickettsia sibirica (strain ATCC VR-151 / 246).